Consider the following 84-residue polypeptide: Anaphase-promoting complex subunit 11 (84 aa).

The RING-type; atypical zinc-finger motif lies at 34 to 77 (CPDCKLPGDDCPLIWGACNHAFHLHCILKWVNSQTSQAHCPMCR).

It belongs to the RING-box family. Part of the APC/C complex composed of at least 10 subunits. Interacts with APC2.

The protein resides in the cytoplasm. It is found in the nucleus. It functions in the pathway protein modification; protein ubiquitination. Its function is as follows. Component of the anaphase promoting complex/cyclosome (APC/C), a cell cycle-regulated E3 ubiquitin-protein ligase complex that controls progression through mitosis and the G1 phase of the cell cycle. The APC/C complex controls several key steps in the cell cycle by mediating ubiquitination and subsequent degradation of target proteins such as cyclins. The APC/C complex is required for the female gametophyte development and is involved in several aspect of development by controlling cell division and cell elongation. Involved in the control of endoreduplication. May recruit the E2 ubiquitin-conjugating enzymes to the complex. The protein is Anaphase-promoting complex subunit 11 of Arabidopsis thaliana (Mouse-ear cress).